Here is a 58-residue protein sequence, read N- to C-terminus: Small ribosomal subunit protein bS21 (58 aa).

Residues R35–K58 form a disordered region. A compositionally biased stretch (basic residues) spans V43–K58.

The protein belongs to the bacterial ribosomal protein bS21 family.

In Acetivibrio thermocellus (strain ATCC 27405 / DSM 1237 / JCM 9322 / NBRC 103400 / NCIMB 10682 / NRRL B-4536 / VPI 7372) (Clostridium thermocellum), this protein is Small ribosomal subunit protein bS21.